The primary structure comprises 491 residues: Probable glycine dehydrogenase (decarboxylating) subunit 2 (491 aa).

Lys-273 is modified (N6-(pyridoxal phosphate)lysine).

The protein belongs to the GcvP family. C-terminal subunit subfamily. As to quaternary structure, the glycine cleavage system is composed of four proteins: P, T, L and H. In this organism, the P 'protein' is a heterodimer of two subunits. Requires pyridoxal 5'-phosphate as cofactor.

It carries out the reaction N(6)-[(R)-lipoyl]-L-lysyl-[glycine-cleavage complex H protein] + glycine + H(+) = N(6)-[(R)-S(8)-aminomethyldihydrolipoyl]-L-lysyl-[glycine-cleavage complex H protein] + CO2. Its function is as follows. The glycine cleavage system catalyzes the degradation of glycine. The P protein binds the alpha-amino group of glycine through its pyridoxal phosphate cofactor; CO(2) is released and the remaining methylamine moiety is then transferred to the lipoamide cofactor of the H protein. The chain is Probable glycine dehydrogenase (decarboxylating) subunit 2 from Bacillus cereus (strain ATCC 10987 / NRS 248).